The chain runs to 503 residues: Structure-specific endonuclease subunit EME2 (503 aa).

3 stretches are compositionally biased toward basic and acidic residues: residues 1–10 (METKQERETG), 38–48 (ETNKPQTESRK), and 112–135 (AEEK…LEKI). The segment at 1–135 (METKQERETG…KAQKKELEKI (135 aa)) is disordered. The nuclease-like domain; forms the post-nick DNA binding interface and is involved in DNA recognition and bending stretch occupies residues 70 to 366 (QPDVEEKTKN…RPFRKHWEAQ (297 aa)). Residues 103 to 151 (EQVAAEQEQAEEKKRQRELKRQEKAQKKELEKIERERRKETNLALKLLR) adopt a coiled-coil conformation. Positions 388–503 (GLPLTWRRQI…NPELVLDLNS (116 aa)) are helix-hairpin-helix (2HhH); forms the pre-nick DNA binding interface and is involved in DNA recognition and bending.

This sequence belongs to the EME1/MMS4 family. Part of the heterodimeric MUS81-EME2 complex; the complex forms specifically during the DNA replication phase of the cell cycle.

Its subcellular location is the nucleus. Its function is as follows. Non-catalytic subunit of the structure-specific, heterodimeric DNA endonuclease MUS81-EME2 which is involved in the maintenance of genome stability. In the complex, EME2 is required for DNA cleavage, participating in DNA recognition and bending. MUS81-EME2 cleaves 3'-flaps and nicked Holliday junctions, and exhibit limited endonuclease activity with 5' flaps and nicked double-stranded DNAs. MUS81-EME2 which is active during the replication of DNA is more specifically involved in replication fork processing. Replication forks frequently encounter obstacles to their passage, including DNA base lesions, DNA interstrand cross-links, difficult-to-replicate sequences, transcription bubbles, or tightly bound proteins. One mechanism for the restart of a stalled replication fork involves nucleolytic cleavage mediated by the MUS81-EME2 endonuclease. By acting upon the stalled fork, MUS81-EME2 generates a DNA double-strand break (DSB) that can be repaired by homologous recombination, leading to the restoration of an active fork. MUS81-EME2 could also function in telomere maintenance. The sequence is that of Structure-specific endonuclease subunit EME2 (eme2) from Xenopus tropicalis (Western clawed frog).